Reading from the N-terminus, the 1195-residue chain is ATP-dependent DNA helicase Hel308 (1195 aa).

Residues Gln-20 and 39 to 46 (IPTASGKT) contribute to the ATP site. Positions 26-196 (RGLLDKNKNF…WLNAELIVDD (171 aa)) constitute a Helicase ATP-binding domain. A DEAH box motif is present at residues 143–146 (DEIH). The DOD-type homing endonuclease domain maps to 451–584 (FIGYFIGDGY…LQFVLLRFGI (134 aa)).

This sequence belongs to the helicase family. Hel308 subfamily. In terms of assembly, monomer. This protein undergoes a protein self splicing that involves a post-translational excision of the intervening region (intein) followed by peptide ligation.

The catalysed reaction is Couples ATP hydrolysis with the unwinding of duplex DNA by translocating in the 3'-5' direction.. It catalyses the reaction ATP + H2O = ADP + phosphate + H(+). Functionally, DNA-dependent ATPase and 3'-5' DNA helicase that may be involved in repair of stalled replication forks. The chain is ATP-dependent DNA helicase Hel308 from Methanocaldococcus jannaschii (strain ATCC 43067 / DSM 2661 / JAL-1 / JCM 10045 / NBRC 100440) (Methanococcus jannaschii).